A 130-amino-acid chain; its full sequence is Acyl carrier protein 2, chloroplastic (130 aa).

A chloroplast-targeting transit peptide spans 1 to 48; that stretch reads MASITGSSVSFKCAPLQSSFNSKNYALKSSVTFWRRTPVMPRGLSVSC. The Carrier domain maps to 52 to 127; the sequence is PEMVTKVSDI…EAADMIEALQ (76 aa). Serine 87 is subject to O-(pantetheine 4'-phosphoryl)serine.

This sequence belongs to the acyl carrier protein (ACP) family. Post-translationally, 4'-phosphopantetheine is transferred from CoA to a specific serine of apo-ACP by acpS. This modification is essential for activity because fatty acids are bound in thioester linkage to the sulfhydryl of the prosthetic group. Roots, leaves and seeds.

Its subcellular location is the plastid. It is found in the chloroplast. The protein operates within lipid metabolism; fatty acid biosynthesis. Functionally, carrier of the growing fatty acid chain in fatty acid biosynthesis. The protein is Acyl carrier protein 2, chloroplastic (ACL1.2) of Spinacia oleracea (Spinach).